A 382-amino-acid polypeptide reads, in one-letter code: Pentraxin-related protein PTX3 (382 aa).

Positions 1 to 17 (MHISVILFCALWSAVSA) are cleaved as a signal peptide. The stretch at 79-137 (VMLRGELQKLQAELGRLEGSLQKLCGPEAPSETRLARALDDLLQASRDAGRRLARLEDA) forms a coiled coil. 2 disulfides stabilise this stretch: C180/C358 and C211/C272. The Pentraxin (PTX) domain maps to 180 to 382 (CETAILFPMR…QPHGGAQYVY (203 aa)). N221 is a glycosylation site (N-linked (GlcNAc...) asparagine).

As to quaternary structure, homooctamer; disulfide-linked. Binds to C1q.

Its subcellular location is the secreted. Functionally, plays a role in the regulation of innate resistance to pathogens, inflammatory reactions, possibly clearance of self-components and female fertility. In Bos taurus (Bovine), this protein is Pentraxin-related protein PTX3 (PTX3).